The sequence spans 414 residues: Glucose-6-phosphate isomerase (414 aa).

The active-site Proton donor is the Glu-266. Catalysis depends on residues His-292 and Lys-405.

Belongs to the GPI family.

It is found in the cytoplasm. The enzyme catalyses alpha-D-glucose 6-phosphate = beta-D-fructose 6-phosphate. Its pathway is carbohydrate biosynthesis; gluconeogenesis. It functions in the pathway carbohydrate degradation; glycolysis; D-glyceraldehyde 3-phosphate and glycerone phosphate from D-glucose: step 2/4. In terms of biological role, catalyzes the reversible isomerization of glucose-6-phosphate to fructose-6-phosphate. This is Glucose-6-phosphate isomerase from Thermus thermophilus (strain ATCC BAA-163 / DSM 7039 / HB27).